Consider the following 528-residue polypeptide: ATP synthase subunit alpha (528 aa).

ATP is bound at residue 169–176 (GDRQTGKT).

The protein belongs to the ATPase alpha/beta chains family. In terms of assembly, F-type ATPases have 2 components, CF(1) - the catalytic core - and CF(0) - the membrane proton channel. CF(1) has five subunits: alpha(3), beta(3), gamma(1), delta(1), epsilon(1). CF(0) has three main subunits: a(1), b(2) and c(9-12). The alpha and beta chains form an alternating ring which encloses part of the gamma chain. CF(1) is attached to CF(0) by a central stalk formed by the gamma and epsilon chains, while a peripheral stalk is formed by the delta and b chains.

It localises to the cell membrane. The enzyme catalyses ATP + H2O + 4 H(+)(in) = ADP + phosphate + 5 H(+)(out). In terms of biological role, produces ATP from ADP in the presence of a proton gradient across the membrane. The alpha chain is a regulatory subunit. In Mycoplasmopsis agalactiae (strain NCTC 10123 / CIP 59.7 / PG2) (Mycoplasma agalactiae), this protein is ATP synthase subunit alpha.